The chain runs to 543 residues: 2,3-bisphosphoglycerate-independent phosphoglycerate mutase (543 aa).

2 residues coordinate Mn(2+): D24 and S74. Catalysis depends on S74, which acts as the Phosphoserine intermediate. Residues H135, 165–166 (RD), R197, R203, 268–271 (RPDR), and K341 each bind substrate. Mn(2+) contacts are provided by D408, H412, D449, H450, and H467.

It belongs to the BPG-independent phosphoglycerate mutase family. As to quaternary structure, monomer. Requires Mn(2+) as cofactor.

The catalysed reaction is (2R)-2-phosphoglycerate = (2R)-3-phosphoglycerate. The protein operates within carbohydrate degradation; glycolysis; pyruvate from D-glyceraldehyde 3-phosphate: step 3/5. Functionally, catalyzes the interconversion of 2-phosphoglycerate and 3-phosphoglycerate. The protein is 2,3-bisphosphoglycerate-independent phosphoglycerate mutase of Parasynechococcus marenigrum (strain WH8102).